The following is a 186-amino-acid chain: ATP synthase subunit delta (186 aa).

It belongs to the ATPase delta chain family. In terms of assembly, F-type ATPases have 2 components, F(1) - the catalytic core - and F(0) - the membrane proton channel. F(1) has five subunits: alpha(3), beta(3), gamma(1), delta(1), epsilon(1). F(0) has three main subunits: a(1), b(2) and c(10-14). The alpha and beta chains form an alternating ring which encloses part of the gamma chain. F(1) is attached to F(0) by a central stalk formed by the gamma and epsilon chains, while a peripheral stalk is formed by the delta and b chains.

The protein resides in the cell inner membrane. Its function is as follows. F(1)F(0) ATP synthase produces ATP from ADP in the presence of a proton or sodium gradient. F-type ATPases consist of two structural domains, F(1) containing the extramembraneous catalytic core and F(0) containing the membrane proton channel, linked together by a central stalk and a peripheral stalk. During catalysis, ATP synthesis in the catalytic domain of F(1) is coupled via a rotary mechanism of the central stalk subunits to proton translocation. Functionally, this protein is part of the stalk that links CF(0) to CF(1). It either transmits conformational changes from CF(0) to CF(1) or is implicated in proton conduction. The sequence is that of ATP synthase subunit delta from Bradyrhizobium diazoefficiens (strain JCM 10833 / BCRC 13528 / IAM 13628 / NBRC 14792 / USDA 110).